The chain runs to 1138 residues: Nuclear pore complex-interacting protein family member B4 (1138 aa).

Residues 63-87 (VIIAFPTSYKVVITLWIVYLWVSLL) form a helical membrane-spanning segment. Disordered stretches follow at residues 241-263 (NRMGHQPPPPTQQHSITDNSLSL), 291-620 (TPLP…NIKT), and 873-1138 (ERLR…RRLS). The span at 252 to 262 (QQHSITDNSLS) shows a compositional bias: polar residues. Residues 349-359 (PLPPSALPSAP) are compositionally biased toward pro residues. Composition is skewed to basic and acidic residues over residues 406–416 (DNIKTPAERLR), 448–458 (DNIKTPAERLR), 490–500 (DNIKTPAERLR), 532–542 (DNIKTPAERLR), 574–584 (DNIKTPAERLR), 908–918 (DNIKTPAERLR), 950–960 (DNIKTPAERLR), and 992–1002 (DNIKTPAERLR).

This sequence belongs to the NPIP family.

The protein resides in the membrane. The sequence is that of Nuclear pore complex-interacting protein family member B4 (NPIPB4) from Homo sapiens (Human).